The primary structure comprises 93 residues: Small ribosomal subunit protein bS16 (93 aa).

This sequence belongs to the bacterial ribosomal protein bS16 family.

In Roseiflexus castenholzii (strain DSM 13941 / HLO8), this protein is Small ribosomal subunit protein bS16.